Here is a 229-residue protein sequence, read N- to C-terminus: MKRSKKYLAVSQMFDIKKRYPLQEAIKLTKQSQITKFDATVECAFHLNLDPKKADQNLRGALVLPHGTGKTLKLAVIAKGEQAKIAKEAQADYVGDEDLIEKISKNWFDFDVLVSTPEMMPQLSKLGRLLGPKGLMPNPKTGTVTDNVGQAVSEIKNGKIEYRLDKNGNIHAIIGKTSFEEHKLLENLKTLYLQLMRIKPRTAKGNYIKNVTISTTMSPGIKIDPITIA.

It belongs to the universal ribosomal protein uL1 family. Part of the 50S ribosomal subunit.

In terms of biological role, binds directly to 23S rRNA. The L1 stalk is quite mobile in the ribosome, and is involved in E site tRNA release. Functionally, protein L1 is also a translational repressor protein, it controls the translation of the L11 operon by binding to its mRNA. The sequence is that of Large ribosomal subunit protein uL1 from Phytoplasma australiense.